Reading from the N-terminus, the 1057-residue chain is Outer capsid protein VP2 (1057 aa).

The protein belongs to the orbivirus VP2 family.

It is found in the virion. Functionally, the VP2 protein is one of the two proteins (with VP5) which constitute the virus particle outer capsid. It is the major target of the host immunogenic response. This chain is Outer capsid protein VP2 (Segment-2), found in Anas (ducks).